We begin with the raw amino-acid sequence, 1017 residues long: A-type ATP synthase subunit A (1017 aa).

Residues 396–529 (FLGYLIADGT…FSYLLAKLGI (134 aa)) form the DOD-type homing endonuclease domain.

The protein belongs to the ATPase alpha/beta chains family. Has multiple subunits with at least A(3), B(3), C, D, E, F, H, I and proteolipid K(x). This protein undergoes a protein self splicing that involves a post-translational excision of the VDE intervening region (intein) followed by peptide ligation.

The protein resides in the cell membrane. It carries out the reaction ATP + H2O + 4 H(+)(in) = ADP + phosphate + 5 H(+)(out). Functionally, component of the A-type ATP synthase that produces ATP from ADP in the presence of a proton gradient across the membrane. The A chain is the catalytic subunit. This Pyrococcus abyssi (strain GE5 / Orsay) protein is A-type ATP synthase subunit A.